The chain runs to 313 residues: Ribosomal RNA small subunit methyltransferase H (313 aa).

Residues 35–37 (GGH), Asp55, Phe79, Asp101, and Gln108 each bind S-adenosyl-L-methionine.

Belongs to the methyltransferase superfamily. RsmH family.

The protein resides in the cytoplasm. It catalyses the reaction cytidine(1402) in 16S rRNA + S-adenosyl-L-methionine = N(4)-methylcytidine(1402) in 16S rRNA + S-adenosyl-L-homocysteine + H(+). Specifically methylates the N4 position of cytidine in position 1402 (C1402) of 16S rRNA. The sequence is that of Ribosomal RNA small subunit methyltransferase H from Escherichia coli O127:H6 (strain E2348/69 / EPEC).